A 116-amino-acid polypeptide reads, in one-letter code: Small ribosomal subunit protein uS11m (116 aa).

It belongs to the universal ribosomal protein uS11 family.

It localises to the mitochondrion. In Chondrus crispus (Carrageen Irish moss), this protein is Small ribosomal subunit protein uS11m (RPS11).